The following is a 567-amino-acid chain: Glucose-6-phosphate isomerase, cytosolic (567 aa).

Glutamate 360 serves as the catalytic Proton donor. Catalysis depends on residues histidine 391 and lysine 516.

It belongs to the GPI family. In terms of assembly, homodimer.

The protein resides in the cytoplasm. It catalyses the reaction alpha-D-glucose 6-phosphate = beta-D-fructose 6-phosphate. Its pathway is carbohydrate degradation; glycolysis; D-glyceraldehyde 3-phosphate and glycerone phosphate from D-glucose: step 2/4. The protein is Glucose-6-phosphate isomerase, cytosolic (PHI1) of Zea mays (Maize).